The chain runs to 578 residues: ATP-dependent RNA helicase CHR1 (578 aa).

The disordered stretch occupies residues 1–95 (MDIFRILSRG…NETKAKEEEI (95 aa)). Composition is skewed to basic and acidic residues over residues 44–53 (EVERETDFFH) and 78–94 (NKEE…KEEE). The short motif at 131–159 (DMIGRFHINKKVLSNLIDNEFVEPTPIQC) is the Q motif element. The region spanning 162–339 (IPITLNNRDL…HSIMKDPLRI (178 aa)) is the Helicase ATP-binding domain. 175 to 182 (APTGSGKT) contributes to the ATP binding site. The DEAD box signature appears at 286-289 (DEAD). Residues 350–514 (TIDQKLVFTG…GYSQWMEDMG (165 aa)) form the Helicase C-terminal domain. Basic and acidic residues-rich tracts occupy residues 517–531 (SKKE…EIQR) and 561–578 (ESKQ…EREE). The tract at residues 517–578 (SKKEKKQIKT…ESHSNDEREE (62 aa)) is disordered.

This sequence belongs to the DEAD box helicase family. DDX52/ROK1 subfamily. As to quaternary structure, interacts with the U3 snoRNA and is associated with the 90S and 40S pre-ribosomes.

The protein localises to the nucleus. It is found in the nucleolus. The catalysed reaction is ATP + H2O = ADP + phosphate + H(+). ATP-dependent RNA helicase involved in 40S ribosomal subunit biogenesis. Required for the processing and cleavage of 35S pre-rRNA at sites A0, A1, and A2, leading to mature 18S rRNA. In Candida albicans (strain SC5314 / ATCC MYA-2876) (Yeast), this protein is ATP-dependent RNA helicase CHR1 (CHR1).